The chain runs to 78 residues: Translational regulator CsrA (78 aa).

It belongs to the CsrA/RsmA family. In terms of assembly, homodimer; the beta-strands of each monomer intercalate to form a hydrophobic core, while the alpha-helices form wings that extend away from the core.

It localises to the cytoplasm. A translational regulator that binds mRNA to regulate translation initiation and/or mRNA stability. Usually binds in the 5'-UTR at or near the Shine-Dalgarno sequence preventing ribosome-binding, thus repressing translation. Its main target seems to be the major flagellin gene, while its function is anatagonized by FliW. This chain is Translational regulator CsrA, found in Borrelia hermsii (strain HS1 / DAH).